Consider the following 89-residue polypeptide: MSKLHFLILLSVIVSVFCIEPQDIGCTGISTAEFEEKDATCSKCEEDYSGNGMIDRCRSDCYSGPFFKSCVELLNKGYDEKDENVKPEW.

Residues 1-18 (MSKLHFLILLSVIVSVFC) form the signal peptide.

Belongs to the arthropod CHH/MIH/GIH/VIH hormone family. In terms of tissue distribution, expressed by the venom gland.

It is found in the secreted. May increase the toxicity of alpha-latrotoxin and/or other venom components. Is non-toxic to mice and to the cockroach Periplaneta americana. In Steatoda grossa (False black widow), this protein is Alpha-latrotoxin associated low molecular weight protein SGV242-280.